Consider the following 524-residue polypeptide: 11-oxo-beta-amyrin 30-oxidase (524 aa).

The helical transmembrane segment at 9–29 threads the bilayer; it reads GTTVIISVLSVLLAVIPWYLL. Cysteine 472 is a binding site for heme.

The protein belongs to the cytochrome P450 family. Heme serves as cofactor. As to expression, expressed in flowers. Detected in roots upon salt treatment.

It localises to the membrane. The enzyme catalyses 11-oxo-beta-amyrin + 3 reduced [NADPH--hemoprotein reductase] + 3 O2 = glycyrrhetinate + 3 oxidized [NADPH--hemoprotein reductase] + 4 H2O + 4 H(+). In terms of biological role, involved in the biosynthesis of triterpenoid saponins. Catalyzes three sequential oxidation steps at C-30 of 11-oxo-beta-amyrin. Also able to catalyze sequential C-30 hydroxylation of beta-amyrin to produce 30-hydroxy-beta-amyrin and 11-deoxoglycyrrhetinic acid. In Medicago truncatula (Barrel medic), this protein is 11-oxo-beta-amyrin 30-oxidase (CYP72A63).